The sequence spans 765 residues: Dipeptidyl peptidase 4 (765 aa).

The Cytoplasmic portion of the chain corresponds to Met-1–Lys-6. A helical; Signal-anchor for type II membrane protein transmembrane segment spans residues Val-7–Thr-29. The Extracellular segment spans residues Lys-30–Leu-765. Asn-84, Asn-91, Asn-149, Asn-218, Asn-228, Asn-271, Asn-280, Asn-320, and Asn-392 each carry an N-linked (GlcNAc...) asparagine glycan. Cystine bridges form between Cys-384–Cys-393, Cys-443–Cys-446, and Cys-453–Cys-471. Asn-495 carries N-linked (GlcNAc...) asparagine glycosylation. The active-site Charge relay system is Ser-629. A disulfide bridge connects residues Cys-648 and Cys-761. A glycan (N-linked (GlcNAc...) asparagine) is linked at Asn-684. Active-site charge relay system residues include Asp-707 and His-739.

It belongs to the peptidase S9B family. DPPIV subfamily. In terms of assembly, monomer. Homodimer. Heterodimer with Seprase (FAP). Requires homodimerization for optimal dipeptidyl peptidase activity and T-cell costimulation. Found in a membrane raft complex, at least composed of BCL10, CARD11, DPP4 and IKBKB. Associates with collagen. Interacts with PTPRC; the interaction is enhanced in an interleukin-12-dependent manner in activated lymphocytes. Interacts (via extracellular domain) with ADA; does not inhibit its dipeptidyl peptidase activity. Interacts with CAV1 (via the N-terminus); the interaction is direct. Interacts (via cytoplasmic tail) with CARD11 (via PDZ domain); its homodimerization is necessary for interaction with CARD11. Interacts with IGF2R; the interaction is direct. Interacts with GPC3. In terms of processing, the soluble form (Dipeptidyl peptidase 4 soluble form also named SDPP) derives from the membrane form (Dipeptidyl peptidase 4 membrane form also named MDPP) by proteolytic processing. Post-translationally, N- and O-Glycosylated. Phosphorylated. Mannose 6-phosphate residues in the carbohydrate moiety are necessary for interaction with IGF2R in activated T-cells. Mannose 6-phosphorylation is induced during T-cell activation. Intestinal epithelium, dendritic cells and several immune system tissues.

It is found in the secreted. It localises to the cell membrane. The protein localises to the apical cell membrane. The protein resides in the cell projection. Its subcellular location is the invadopodium membrane. It is found in the lamellipodium membrane. It localises to the cell junction. The protein localises to the membrane raft. The catalysed reaction is Release of an N-terminal dipeptide, Xaa-Yaa-|-Zaa-, from a polypeptide, preferentially when Yaa is Pro, provided Zaa is neither Pro nor hydroxyproline.. Its activity is regulated as follows. Inhibited by GPC3 and diprotin A. Its function is as follows. Cell surface glycoprotein receptor involved in the costimulatory signal essential for T-cell receptor (TCR)-mediated T-cell activation. Acts as a positive regulator of T-cell coactivation, by binding at least ADA, CAV1, IGF2R, and PTPRC. Its binding to CAV1 and CARD11 induces T-cell proliferation and NF-kappa-B activation in a T-cell receptor/CD3-dependent manner. Its interaction with ADA also regulates lymphocyte-epithelial cell adhesion. In association with FAP is involved in the pericellular proteolysis of the extracellular matrix (ECM), the migration and invasion of endothelial cells into the ECM. May be involved in the promotion of lymphatic endothelial cells adhesion, migration and tube formation. When overexpressed, enhanced cell proliferation, a process inhibited by GPC3. Also acts as a serine exopeptidase with a dipeptidyl peptidase activity that regulates various physiological processes by cleaving peptides in the circulation, including many chemokines, mitogenic growth factors, neuropeptides and peptide hormones. Removes N-terminal dipeptides sequentially from polypeptides having unsubstituted N-termini provided that the penultimate residue is proline. This chain is Dipeptidyl peptidase 4 (DPP4), found in Bos taurus (Bovine).